A 343-amino-acid polypeptide reads, in one-letter code: Ubiquitin thioesterase OTU1 (343 aa).

A UBX-like region spans residues 45–123 (RCKAKGGTHL…IVEEDQTRPK (79 aa)). The OTU domain maps to 144 to 269 (LTRTAVPADN…GIHYDPLQRN (126 aa)). Residues 149–155 (VPADNSC) are cys-loop. Asp-152 is an active-site residue. Catalysis depends on Cys-155, which acts as the Nucleophile. The variable-loop stretch occupies residues 208–218 (IRRDDTWGGAI). The interval 258 to 262 (YDGIH) is his-loop. Ile-261 is a substrate binding site. His-262 is an active-site residue. The tract at residues 286 to 291 (DIVLVQ) is S2 site. A C2H2-type zinc finger spans residues 313–337 (LRCMICQKGLTGQAEARDHARETGH). His-337 is an active-site residue.

In terms of assembly, interacts with VCP; the interaction is direct. Interacts with FAF2/UBXD8. Interacts with DERL1; however interaction is dependent on the UBAX-like region, suggesting that it may be indirect. Interacts with PLAA, UBXN6 and VCP; may form a complex involved in macroautophagy.

It is found in the cytoplasm. It catalyses the reaction Thiol-dependent hydrolysis of ester, thioester, amide, peptide and isopeptide bonds formed by the C-terminal Gly of ubiquitin (a 76-residue protein attached to proteins as an intracellular targeting signal).. Its function is as follows. Hydrolase that can remove conjugated ubiquitin from proteins and participates in endoplasmic reticulum-associated degradation (ERAD) for misfolded lumenal proteins. May act by triming the ubiquitin chain on the associated substrate to facilitate their threading through the VCP/p97 pore. Ubiquitin moieties on substrates may present a steric impediment to the threading process when the substrate is transferred to the VCP pore and threaded through VCP's axial channel. Mediates deubiquitination of 'Lys-27'-, 'Lys-29'- and 'Lys-33'-linked polyubiquitin chains. Also able to hydrolyze 'Lys-11'-linked ubiquitin chains. Cleaves both polyubiquitin and di-ubiquitin. May play a role in macroautophagy, regulating for instance the clearance of damaged lysosomes. May recruit PLAA, UBXN6 and VCP to damaged lysosome membranes decorated with K48-linked ubiquitin chains and remove these chains allowing autophagosome formation. The protein is Ubiquitin thioesterase OTU1 (Yod1) of Mus musculus (Mouse).